Reading from the N-terminus, the 823-residue chain is Pentatricopeptide repeat-containing protein At4g33990 (823 aa).

16 PPR repeats span residues 85 to 115 (NVCISAKLVNLYCYLGNVALARHTFDHIQNR), 116 to 151 (DVYAWNLMISGYGRAGNSSEVIRCFSLFMLSSGLTP), 152 to 183 (DYRTFPSVLKACRTVIDGNKIHCLALKFGFMW), 184 to 214 (DVYVAASLIHLYSRYKAVGNARILFDEMPVR), 215 to 249 (DMGSWNAMISGYCQSGNAKEALTLSNGLRAMDSVT), 252 to 280 (SLLSACTEAGDFNRGVTIHSYSIKHGLES), 281 to 311 (ELFVSNKLIDLYAEFGRLRDCQKVFDRMYVR), 312 to 346 (DLISWNSIIKAYELNEQPLRAISLFQEMRLSRIQP), 347 to 381 (DCLTLISLASILSQLGDIRACRSVQGFTLRKGWFL), 383 to 413 (DITIGNAVVVMYAKLGLVDSARAVFNWLPNT), 414 to 448 (DVISWNTIISGYAQNGFASEAIEMYNIMEEEGEIA), 450 to 484 (NQGTWVSVLPACSQAGALRQGMKLHGRLLKNGLYL), 485 to 515 (DVFVVTSLADMYGKCGRLEDALSLFYQIPRV), 516 to 550 (NSVPWNTLIACHGFHGHGEKAVMLFKEMLDEGVKP), 551 to 581 (DHITFVTLLSACSHSGLVDEGQWCFEMMQTD), and 587 to 617 (SLKHYGCMVDMYGRAGQLETALKFIKSMSLQ). A type E motif region spans residues 622–697 (IWGALLSACR…TPGWSSMEVD (76 aa)). The tract at residues 698 to 728 (NKVEVFYTGNQTHPMYEEMYRELTALQAKLK) is type E(+) motif. Residues 729-823 (MIGYVPDHRF…NGVCSCGDYW (95 aa)) are type DYW motif.

This sequence belongs to the PPR family. PCMP-H subfamily.

The polypeptide is Pentatricopeptide repeat-containing protein At4g33990 (EMB2758) (Arabidopsis thaliana (Mouse-ear cress)).